Reading from the N-terminus, the 336-residue chain is Succinylglutamate desuccinylase (336 aa).

3 residues coordinate Zn(2+): H59, E62, and H151. E215 is a catalytic residue.

It belongs to the AspA/AstE family. Succinylglutamate desuccinylase subfamily. It depends on Zn(2+) as a cofactor.

It carries out the reaction N-succinyl-L-glutamate + H2O = L-glutamate + succinate. It functions in the pathway amino-acid degradation; L-arginine degradation via AST pathway; L-glutamate and succinate from L-arginine: step 5/5. Transforms N(2)-succinylglutamate into succinate and glutamate. The polypeptide is Succinylglutamate desuccinylase (Pseudomonas fluorescens (strain Pf0-1)).